The sequence spans 125 residues: Large ribosomal subunit protein bL12 (125 aa).

It belongs to the bacterial ribosomal protein bL12 family. In terms of assembly, homodimer. Part of the ribosomal stalk of the 50S ribosomal subunit. Forms a multimeric L10(L12)X complex, where L10 forms an elongated spine to which 2 to 4 L12 dimers bind in a sequential fashion. Binds GTP-bound translation factors.

In terms of biological role, forms part of the ribosomal stalk which helps the ribosome interact with GTP-bound translation factors. Is thus essential for accurate translation. The protein is Large ribosomal subunit protein bL12 of Campylobacter lari (strain RM2100 / D67 / ATCC BAA-1060).